We begin with the raw amino-acid sequence, 275 residues long: Nitrogenase iron protein 1 (275 aa).

Gly-9–Ser-16 serves as a coordination point for ATP. Residue Cys-97 participates in [4Fe-4S] cluster binding. At Arg-100 the chain carries ADP-ribosylarginine; by dinitrogenase reductase ADP-ribosyltransferase. Cys-132 contributes to the [4Fe-4S] cluster binding site.

The protein belongs to the NifH/BchL/ChlL family. As to quaternary structure, homodimer. It depends on [4Fe-4S] cluster as a cofactor. The reversible ADP-ribosylation of Arg-100 inactivates the nitrogenase reductase and regulates nitrogenase activity.

It catalyses the reaction N2 + 8 reduced [2Fe-2S]-[ferredoxin] + 16 ATP + 16 H2O = H2 + 8 oxidized [2Fe-2S]-[ferredoxin] + 2 NH4(+) + 16 ADP + 16 phosphate + 6 H(+). The key enzymatic reactions in nitrogen fixation are catalyzed by the nitrogenase complex, which has 2 components: the iron protein and the molybdenum-iron protein. The polypeptide is Nitrogenase iron protein 1 (nifH1) (Methanosarcina barkeri).